The following is a 77-amino-acid chain: MFVKTGDKVKVIAGKDKGKEGTVLSINVKKNRVVVKGVNKIKKHQKPSQTNANGGVVESEGSIHASNVKVISKKEDK.

The tract at residues 42 to 61 (KKHQKPSQTNANGGVVESEG) is disordered.

It belongs to the universal ribosomal protein uL24 family. Part of the 50S ribosomal subunit.

One of two assembly initiator proteins, it binds directly to the 5'-end of the 23S rRNA, where it nucleates assembly of the 50S subunit. In terms of biological role, one of the proteins that surrounds the polypeptide exit tunnel on the outside of the subunit. The chain is Large ribosomal subunit protein uL24 from Lactobacillus helveticus (strain DPC 4571).